A 476-amino-acid polypeptide reads, in one-letter code: Adenosylhomocysteinase (476 aa).

Substrate is bound by residues Thr-67, Asp-142, and Glu-202. Residue 203–205 participates in NAD(+) binding; the sequence is TTT. Positions 232 and 236 each coordinate substrate. NAD(+) contacts are provided by residues Asn-237, 266–271, Glu-289, Asn-324, 345–347, and Asn-390; these read GYGDVG and IGH.

This sequence belongs to the adenosylhomocysteinase family. NAD(+) is required as a cofactor.

The protein localises to the cytoplasm. The catalysed reaction is S-adenosyl-L-homocysteine + H2O = L-homocysteine + adenosine. It functions in the pathway amino-acid biosynthesis; L-homocysteine biosynthesis; L-homocysteine from S-adenosyl-L-homocysteine: step 1/1. May play a key role in the regulation of the intracellular concentration of adenosylhomocysteine. The sequence is that of Adenosylhomocysteinase from Prochlorococcus marinus (strain MIT 9313).